A 188-amino-acid chain; its full sequence is Peptidyl-tRNA hydrolase (188 aa).

Tyr-14 is a tRNA binding site. Catalysis depends on His-19, which acts as the Proton acceptor. Residues Phe-64, Asn-66, and Asn-112 each coordinate tRNA.

This sequence belongs to the PTH family. In terms of assembly, monomer.

It is found in the cytoplasm. It carries out the reaction an N-acyl-L-alpha-aminoacyl-tRNA + H2O = an N-acyl-L-amino acid + a tRNA + H(+). In terms of biological role, hydrolyzes ribosome-free peptidyl-tRNAs (with 1 or more amino acids incorporated), which drop off the ribosome during protein synthesis, or as a result of ribosome stalling. Functionally, catalyzes the release of premature peptidyl moieties from peptidyl-tRNA molecules trapped in stalled 50S ribosomal subunits, and thus maintains levels of free tRNAs and 50S ribosomes. This Enterococcus faecalis (strain ATCC 700802 / V583) protein is Peptidyl-tRNA hydrolase.